The chain runs to 274 residues: Ribose-5-phosphate isomerase (274 aa).

Belongs to the ribose 5-phosphate isomerase family.

It localises to the cytoplasm. The enzyme catalyses aldehydo-D-ribose 5-phosphate = D-ribulose 5-phosphate. It participates in carbohydrate degradation; pentose phosphate pathway; D-ribose 5-phosphate from D-ribulose 5-phosphate (non-oxidative stage): step 1/1. The sequence is that of Ribose-5-phosphate isomerase (rki1) from Schizosaccharomyces pombe (strain 972 / ATCC 24843) (Fission yeast).